A 103-amino-acid chain; its full sequence is Large ribosomal subunit protein bL21 (103 aa).

It belongs to the bacterial ribosomal protein bL21 family. Part of the 50S ribosomal subunit. Contacts protein L20.

In terms of biological role, this protein binds to 23S rRNA in the presence of protein L20. This chain is Large ribosomal subunit protein bL21, found in Shewanella sediminis (strain HAW-EB3).